Reading from the N-terminus, the 730-residue chain is Ribosomal RNA large subunit methyltransferase K/L (730 aa).

The 112-residue stretch at 46–157 (TAYRLCVWSR…RGEAILSLDL (112 aa)) folds into the THUMP domain. The interval 395 to 418 (ERREAQPEGTEVRQQAPQASEPAR) is disordered.

This sequence belongs to the methyltransferase superfamily. RlmKL family.

It localises to the cytoplasm. The catalysed reaction is guanosine(2445) in 23S rRNA + S-adenosyl-L-methionine = N(2)-methylguanosine(2445) in 23S rRNA + S-adenosyl-L-homocysteine + H(+). It carries out the reaction guanosine(2069) in 23S rRNA + S-adenosyl-L-methionine = N(2)-methylguanosine(2069) in 23S rRNA + S-adenosyl-L-homocysteine + H(+). Functionally, specifically methylates the guanine in position 2445 (m2G2445) and the guanine in position 2069 (m7G2069) of 23S rRNA. In Pseudomonas putida (strain GB-1), this protein is Ribosomal RNA large subunit methyltransferase K/L.